Here is a 276-residue protein sequence, read N- to C-terminus: Large ribosomal subunit protein uL2 (276 aa).

The disordered stretch occupies residues 225–276 (MNPNDHPHGGGEGRNPIGRNPVTPWGKPALGAKTRKKKNPSNRFIVKRRGKK). Basic residues predominate over residues 257 to 276 (KTRKKKNPSNRFIVKRRGKK).

Belongs to the universal ribosomal protein uL2 family. In terms of assembly, part of the 50S ribosomal subunit. Forms a bridge to the 30S subunit in the 70S ribosome.

Its function is as follows. One of the primary rRNA binding proteins. Required for association of the 30S and 50S subunits to form the 70S ribosome, for tRNA binding and peptide bond formation. It has been suggested to have peptidyltransferase activity; this is somewhat controversial. Makes several contacts with the 16S rRNA in the 70S ribosome. The sequence is that of Large ribosomal subunit protein uL2 from Desulfitobacterium hafniense (strain DSM 10664 / DCB-2).